Reading from the N-terminus, the 462-residue chain is MERIRPYRKTFLADLETPVTAYLKLAEKAPVSFLLESVERGRQSRFSIVGVGARRTFRLKDGVFTVNGERVETRDPLRALYERVYAPLERHPDLPPFFGGVVGYAAYDLVRYYERLPSLKPDDLGLPDLLFVEPEVVAVFDHLKNLLHLVAPGRDPEEAEARLFWAERRLKGPLPGVPGERAGGRARFQADFSREAYLEAVRRALDYIRAGDIFQVVLSLRLSSPLTVHPFALYRALRSVNPSPYMGYLDLGEVVLVSASPESLLRSDGRRVVTRPIAGTRPRGKDEEEDKRLAEELLRDEKEVAEHVMLLDLSRNDIGRVAAFGTVRVLEPLHVEHYSHVMHLVSTVEGILAEGKTPLDALASVLPMGTVSGAPKIRAMEIIEELEPHRRGPYGGSFGYLAYDGAMDMALTLRTFVVAKGWMHVQAGAGIVADSVPEREYEECWNKARALLKAVEMAEAGL.

Residues S37 and 244–246 contribute to the L-tryptophan site; that span reads PYM. 279 to 280 contributes to the chorismate binding site; sequence GT. E306 contributes to the Mg(2+) binding site. Chorismate-binding positions include Y394, R414, 428-430, and G430; that span reads GAG. E443 contributes to the Mg(2+) binding site.

Belongs to the anthranilate synthase component I family. Heterotetramer consisting of two non-identical subunits: a beta subunit (TrpG) and a large alpha subunit (TrpE). Mg(2+) is required as a cofactor.

It carries out the reaction chorismate + L-glutamine = anthranilate + pyruvate + L-glutamate + H(+). The protein operates within amino-acid biosynthesis; L-tryptophan biosynthesis; L-tryptophan from chorismate: step 1/5. With respect to regulation, feedback inhibited by tryptophan. Functionally, part of a heterotetrameric complex that catalyzes the two-step biosynthesis of anthranilate, an intermediate in the biosynthesis of L-tryptophan. In the first step, the glutamine-binding beta subunit (TrpG) of anthranilate synthase (AS) provides the glutamine amidotransferase activity which generates ammonia as a substrate that, along with chorismate, is used in the second step, catalyzed by the large alpha subunit of AS (TrpE) to produce anthranilate. In the absence of TrpG, TrpE can synthesize anthranilate directly from chorismate and high concentrations of ammonia. This Thermus thermophilus (strain ATCC 27634 / DSM 579 / HB8) protein is Anthranilate synthase component 1 (trpE).